Reading from the N-terminus, the 130-residue chain is Small ribosomal subunit protein uS11c (130 aa).

Belongs to the universal ribosomal protein uS11 family. As to quaternary structure, part of the 30S ribosomal subunit.

The protein localises to the plastid. Its subcellular location is the chloroplast. The chain is Small ribosomal subunit protein uS11c from Tetradesmus obliquus (Green alga).